Here is a 58-residue protein sequence, read N- to C-terminus: uncharacterized protein (58 aa).

This is an uncharacterized protein from Phaseolus vulgaris (Kidney bean).